An 86-amino-acid chain; its full sequence is MTRFVLFISCFFLIGMVVECKEGYLLGSRGCKMNCLTRPEKFCELECSLVGGENGYCAYWLACYCYNVPESVKLWESDTNECGKRK.

Residues 1–20 form the signal peptide; the sequence is MTRFVLFISCFFLIGMVVEC. In terms of domain architecture, LCN-type CS-alpha/beta spans 21–83; sequence KEGYLLGSRG…LWESDTNECG (63 aa). 4 disulfides stabilise this stretch: Cys-31-Cys-82, Cys-35-Cys-57, Cys-43-Cys-63, and Cys-47-Cys-65. Cysteine amide is present on Cys-82.

It belongs to the long (4 C-C) scorpion toxin superfamily. Sodium channel inhibitor family. Beta subfamily. Expressed by the venom gland.

The protein localises to the secreted. In terms of biological role, beta toxins bind voltage-independently at site-4 of sodium channels (Nav) and shift the voltage of activation toward more negative potentials thereby affecting sodium channel activation and promoting spontaneous and repetitive firing. In Tityus obscurus (Amazonian scorpion), this protein is Toxin To8.